Here is a 576-residue protein sequence, read N- to C-terminus: Interleukin-1 receptor type 1 (576 aa).

The N-terminal stretch at 1–19 is a signal peptide; it reads MENMKVLLGFICLIVPLLS. 3 consecutive Ig-like C2-type domains span residues 20 to 115, 121 to 217, and 229 to 331; these read LETD…ITMS, PGLC…RVIT, and PVIM…VRLV. Topologically, residues 20-338 are extracellular; the sequence is LETDKCTEYP…RLVYPVPDFK (319 aa). Intrachain disulfides connect C25–C107, C46–C99, and C145–C199. N63 and N103 each carry an N-linked (GlcNAc...) asparagine glycan. 3 N-linked (GlcNAc...) asparagine glycosylation sites follow: N236, N252, and N266. C251 and C315 are disulfide-bonded. Residues 339–359 traverse the membrane as a helical segment; that stretch reads NYLIGGFAIFTATAVFCACIY. Residues 360–576 are Cytoplasmic-facing; sequence KVFKVDIVLW…LQAETHLPLG (217 aa). Residues 386-541 form the TIR domain; sequence RTYDAYVLYP…RFWKNLRYQM (156 aa). Residue E473 is part of the active site. Residue Y499 is modified to Phosphotyrosine. Phosphothreonine; by PKC is present on T556.

This sequence belongs to the interleukin-1 receptor family. The interleukin-1 receptor complex is a heterodimer of IL1R1 and IL1RAP. Interacts with PIK3R1. Interacts with IL1A. Post-translationally, a soluble form (sIL1R1) is probably produced by proteolytic cleavage at the cell surface (shedding). In terms of processing, rapidly phosphorylated on Tyr-499 in response to IL-1, which creates a SH2 binding site for the PI 3-kinase regulatory subunit PIK3R1.

It is found in the membrane. The protein resides in the cell membrane. The protein localises to the secreted. It catalyses the reaction NAD(+) + H2O = ADP-D-ribose + nicotinamide + H(+). Functionally, receptor for IL1A, IL1B and IL1RN. After binding to interleukin-1 associates with the coreceptor IL1RAP to form the high affinity interleukin-1 receptor complex which mediates interleukin-1-dependent activation of NF-kappa-B, MAPK and other pathways. Signaling involves the recruitment of adapter molecules such as TOLLIP, MYD88, and IRAK1 or IRAK2 via the respective TIR domains of the receptor/coreceptor subunits. Binds ligands with comparable affinity and binding of antagonist IL1RN prevents association with IL1RAP to form a signaling complex. Involved in IL1B-mediated costimulation of IFNG production from T-helper 1 (Th1) cells. The protein is Interleukin-1 receptor type 1 (Il1r1) of Rattus norvegicus (Rat).